A 299-amino-acid chain; its full sequence is Porphobilinogen deaminase (299 aa).

Residue C234 is modified to S-(dipyrrolylmethanemethyl)cysteine.

It belongs to the HMBS family. As to quaternary structure, monomer. Dipyrromethane is required as a cofactor.

It carries out the reaction 4 porphobilinogen + H2O = hydroxymethylbilane + 4 NH4(+). It functions in the pathway porphyrin-containing compound metabolism; protoporphyrin-IX biosynthesis; coproporphyrinogen-III from 5-aminolevulinate: step 2/4. Functionally, tetrapolymerization of the monopyrrole PBG into the hydroxymethylbilane pre-uroporphyrinogen in several discrete steps. The sequence is that of Porphobilinogen deaminase from Corynebacterium efficiens (strain DSM 44549 / YS-314 / AJ 12310 / JCM 11189 / NBRC 100395).